The following is a 163-amino-acid chain: Troponin C, skeletal muscle (163 aa).

A2 is subject to Blocked amino end (Ala). 4 EF-hand domains span residues 18–53 (EMIA…LGQN), 54–89 (PTKE…QMKE), 94–129 (KSEE…TGEH), and 130–163 (VTEE…EGVQ). 18 residues coordinate Ca(2+): D31, D33, D37, E42, D67, D69, S71, T73, E78, D107, N109, D111, E118, D143, N145, D147, R149, and E154.

This sequence belongs to the troponin C family.

Troponin is the central regulatory protein of striated muscle contraction. Tn consists of three components: Tn-I which is the inhibitor of actomyosin ATPase, Tn-T which contains the binding site for tropomyosin and Tn-C. The binding of calcium to Tn-C abolishes the inhibitory action of Tn on actin filaments. The polypeptide is Troponin C, skeletal muscle (TNNC2) (Gallus gallus (Chicken)).